Consider the following 174-residue polypeptide: Ribosome rescue factor SmrB (174 aa).

The 76-residue stretch at 96 to 171 (LDLHGLTQQQ…GDAAILVLIE (76 aa)) folds into the Smr domain.

This sequence belongs to the SmrB family. In terms of assembly, associates with collided ribosomes, but not with correctly translating polysomes.

Its function is as follows. Acts as a ribosome collision sensor. Detects stalled/collided disomes (pairs of ribosomes where the leading ribosome is stalled and a second ribosome has collided with it) and endonucleolytically cleaves mRNA at the 5' boundary of the stalled ribosome. Stalled/collided disomes form a new interface (primarily via the 30S subunits) that binds SmrB. Cleaved mRNA becomes available for tmRNA ligation, leading to ribosomal subunit dissociation and rescue of stalled ribosomes. This Tolumonas auensis (strain DSM 9187 / NBRC 110442 / TA 4) protein is Ribosome rescue factor SmrB.